Consider the following 170-residue polypeptide: Cyclic pyranopterin monophosphate synthase (170 aa).

Residues 89-91 and 125-126 each bind substrate; these read LCH and ME. The active site involves Asp140.

It belongs to the MoaC family. In terms of assembly, homohexamer; trimer of dimers.

The catalysed reaction is (8S)-3',8-cyclo-7,8-dihydroguanosine 5'-triphosphate = cyclic pyranopterin phosphate + diphosphate. It functions in the pathway cofactor biosynthesis; molybdopterin biosynthesis. In terms of biological role, catalyzes the conversion of (8S)-3',8-cyclo-7,8-dihydroguanosine 5'-triphosphate to cyclic pyranopterin monophosphate (cPMP). In Streptomyces avermitilis (strain ATCC 31267 / DSM 46492 / JCM 5070 / NBRC 14893 / NCIMB 12804 / NRRL 8165 / MA-4680), this protein is Cyclic pyranopterin monophosphate synthase.